The primary structure comprises 346 residues: FAS-associated factor 2 (346 aa).

Lys-68 carries the N6-acetyllysine modification. A coiled-coil region spans residues 176–251 (SERLEREERN…EEKERKLECL (76 aa)). The segment at 200–262 (ASLRADQEKE…PEPSPDDPDS (63 aa)) is disordered. Positions 204–249 (ADQEKERKKREERERKRRKEEEVQQQKLAEERRRQNLQEEKERKLE) are enriched in basic and acidic residues. In terms of domain architecture, UBX spans 258 to 340 (DDPDSVKIIF…GLSHTEVLFV (83 aa)).

As to quaternary structure, identified in a complex that contains SEL1L, OS9, FAF2/UBXD8, UBE2J1/UBC6E and AUP1. Interacts with YOD1. Interacts (via N-terminus) with UBQLN2 (via C-terminus). Interacts with PNPLA2 and UBAC2. Interacts with ZFAND2B; probably through VCP. Interacts with LMBR1L.

The protein localises to the cytoplasm. The protein resides in the lipid droplet. It localises to the endoplasmic reticulum. In terms of biological role, plays an important role in endoplasmic reticulum-associated degradation (ERAD) that mediates ubiquitin-dependent degradation of misfolded endoplasmic reticulum proteins. By controlling the steady-state expression of the IGF1R receptor, indirectly regulates the insulin-like growth factor receptor signaling pathway. Involved in inhibition of lipid droplet degradation by binding to phospholipase PNPL2 and inhibiting its activity by promoting dissociation of PNPL2 from its endogenous activator, ABHD5 which inhibits the rate of triacylglycerol hydrolysis. Involved in stress granule disassembly: associates with ubiquitinated G3BP1 in response to heat shock, thereby promoting interaction between ubiquitinated G3BP1 and VCP, followed by G3BP1 extraction from stress granules and stress granule disassembly. This chain is FAS-associated factor 2 (Faf2), found in Rattus norvegicus (Rat).